The chain runs to 573 residues: Probable cytochrome c oxidase subunit 1 (573 aa).

A helical transmembrane segment spans residues 40–60; that stretch reads IGIMYCVACISFFFIGGLLAL. Fe(II)-heme a is bound at residue His86. Transmembrane regions (helical) follow at residues 89 to 109, 121 to 141, 170 to 190, 213 to 233, 258 to 278, and 290 to 310; these read IMLLFYATPIVFGFANLVLPL, LNAFSFWLFVFGATIGAAGFI, LWIMGLIVAGLGTILGAVNMI, IMVTSILILIAFPLLTAALFG, LFWFFGHPEVYIIALPFFGIV, and IFGYTTLVYATLSIAALSVAV. Residues His264 and Tyr268 each contribute to the Cu cation site. The segment at residues 264–268 is a cross-link (1'-histidyl-3'-tyrosine (His-Tyr)); sequence HPEVY. Residues His313 and His314 each contribute to the Cu cation site. The next 2 helical transmembrane spans lie at 315-335 and 359-379; these read MFATGAVLLPFFSFMTYLIAV and MLFSVGFMVTFLLGGLTGVLL. His397 lines the heme a3 pocket. Helical transmembrane passes span 398 to 418, 433 to 453, and 476 to 496; these read FHYVLFGTIVFATFAGIYFWF, LHFWLTFIGFHTTFLVQHWLG, and VSTIGAFILGASMFPFVWNVF. Position 399 (His399) interacts with Fe(II)-heme a.

It belongs to the heme-copper respiratory oxidase family.

It is found in the cell membrane. It carries out the reaction 4 Fe(II)-[cytochrome c] + O2 + 8 H(+)(in) = 4 Fe(III)-[cytochrome c] + 2 H2O + 4 H(+)(out). It functions in the pathway energy metabolism; oxidative phosphorylation. Its function is as follows. Cytochrome c oxidase is the component of the respiratory chain that catalyzes the reduction of oxygen to water. Subunits 1-3 form the functional core of the enzyme complex. CO I is the catalytic subunit of the enzyme. Electrons originating in cytochrome c are transferred via the copper A center of subunit 2 and heme A of subunit 1 to the bimetallic center formed by heme A3 and copper B. In Mycobacterium bovis (strain ATCC BAA-935 / AF2122/97), this protein is Probable cytochrome c oxidase subunit 1 (ctaD).